A 66-amino-acid polypeptide reads, in one-letter code: Conotoxin Ca5.2 (66 aa).

A signal peptide spans 1-22; the sequence is MRCVPVFLILLGLIASAPSVDA. A propeptide spanning residues 23-48 is cleaved from the precursor; it reads RPQTKDDALASFHDSAKRHLQRLVNA. Phenylalanine amide is present on phenylalanine 62.

Belongs to the conotoxin T superfamily. In terms of processing, contains 2 disulfide bonds that can be either 'C1-C3, C2-C4' or 'C1-C4, C2-C3', since these disulfide connectivities have been observed for conotoxins with cysteine framework V (for examples, see AC P0DQQ7 and AC P81755). Expressed by the venom duct.

Its subcellular location is the secreted. The sequence is that of Conotoxin Ca5.2 from Conus caracteristicus (Characteristic cone).